A 232-amino-acid chain; its full sequence is Sugar fermentation stimulation protein homolog (232 aa).

The protein belongs to the SfsA family.

The protein is Sugar fermentation stimulation protein homolog of Ruegeria sp. (strain TM1040) (Silicibacter sp.).